A 376-amino-acid polypeptide reads, in one-letter code: Transcription initiation factor IIA subunit 1 (376 aa).

Position 2 is an N-acetylalanine (A2). Composition is skewed to low complexity over residues 69–79 (QVQQQHQPQQQ) and 89–105 (QAQP…TQQV). Disordered regions lie at residues 69–107 (QVQQ…QVLI), 247–266 (QAQI…AQTQ), and 274–329 (DGTG…QELF). Phosphoserine; by TAF1 occurs at positions 280, 281, 316, and 321. Residues 280–329 (SSEEDEDEEEDYDDDEEEDKEKDGAEDGQVEEEPLNSEDDVSDEEGQELF) show a composition bias toward acidic residues. Residues H343 and R344 each contribute to the DNA site.

It belongs to the TFIIA subunit 1 family. TFIIA is a heterodimer of the large unprocessed subunit 1 and a small subunit gamma. It was originally believed to be a heterotrimer of an alpha (p35), a beta (p19) and a gamma subunit (p12). TFIIA forms a complex with TBP. Part of TBP-based Pol II pre-initiation complex (PIC), in which Pol II core assembles with general transcription factors and other specific initiation factors including GTF2E1, GTF2E2, GTF2F1, GTF2F2, TCEA1, ERCC2, ERCC3, GTF2H2, GTF2H3, GTF2H4, GTF2H5, GTF2A1, GTF2A2, GTF2B and TBP; this large multi-subunit PIC complex mediates DNA unwinding and targets Pol II core to the transcription start site where the first phosphodiester bond forms. In terms of processing, the alpha and beta subunits are postranslationally produced from the precursor form by TASP1. The cleavage promotes proteasomal degradation.

The protein resides in the nucleus. Functionally, TFIIA is a component of the transcription machinery of RNA polymerase II and plays an important role in transcriptional activation. TFIIA in a complex with TBP mediates transcriptional activity. The chain is Transcription initiation factor IIA subunit 1 (GTF2A1) from Homo sapiens (Human).